The chain runs to 115 residues: Phosphoribosyl-AMP cyclohydrolase (115 aa).

Asp-80 provides a ligand contact to Mg(2+). Cys-81 serves as a coordination point for Zn(2+). 2 residues coordinate Mg(2+): Asp-82 and Asp-84. Positions 97 and 104 each coordinate Zn(2+).

This sequence belongs to the PRA-CH family. In terms of assembly, homodimer. Requires Mg(2+) as cofactor. Zn(2+) serves as cofactor.

The protein localises to the cytoplasm. The enzyme catalyses 1-(5-phospho-beta-D-ribosyl)-5'-AMP + H2O = 1-(5-phospho-beta-D-ribosyl)-5-[(5-phospho-beta-D-ribosylamino)methylideneamino]imidazole-4-carboxamide. It functions in the pathway amino-acid biosynthesis; L-histidine biosynthesis; L-histidine from 5-phospho-alpha-D-ribose 1-diphosphate: step 3/9. Its function is as follows. Catalyzes the hydrolysis of the adenine ring of phosphoribosyl-AMP. The sequence is that of Phosphoribosyl-AMP cyclohydrolase from Mycolicibacterium gilvum (strain PYR-GCK) (Mycobacterium gilvum (strain PYR-GCK)).